Reading from the N-terminus, the 1027-residue chain is INO80 complex subunit D (1027 aa).

Residue lysine 87 forms a Glycyl lysine isopeptide (Lys-Gly) (interchain with G-Cter in SUMO2) linkage. Serine 132 bears the Phosphoserine mark. Disordered regions lie at residues 193-278 (HFSP…VDPP), 519-574 (RGDN…LSMP), 813-850 (RQQY…HTTS), 914-969 (LSTS…TSPK), and 982-1027 (QLSS…PSPN). A compositionally biased stretch (low complexity) spans 201–216 (SQQQPPQQHSHLSPLS). Residues 229 to 257 (VCKSPQPQNTSLPMQGVAPTTHTIAQARQ) show a composition bias toward polar residues. Positions 525-559 (KVQHQQQRKPRKKTKPPALTKKHKKKRRRGPRRPQ) are enriched in basic residues. Residues 914–932 (LSTSLSTPPTTSNSETTQP) are compositionally biased toward low complexity. Residues 937 to 954 (VTPSSSSVLPGLPQTSFS) show a composition bias toward polar residues. Residues 1001–1027 (APPTGFTVTGATATSTNNASSPFPSPN) are compositionally biased toward low complexity.

Belongs to the INO80D family. As to quaternary structure, component of the chromatin remodeling INO80 complex; specifically part of a complex module associated with the N-terminus of INO80.

It is found in the nucleus. Functionally, putative regulatory component of the chromatin remodeling INO80 complex which is involved in transcriptional regulation, DNA replication and probably DNA repair. This chain is INO80 complex subunit D, found in Homo sapiens (Human).